Consider the following 609-residue polypeptide: Isocitrate dehydrogenase kinase/phosphatase (609 aa).

Residues 325 to 331 and Lys-346 contribute to the ATP site; that span reads APGIKGM. Residue Asp-381 is part of the active site.

The protein belongs to the AceK family.

The protein resides in the cytoplasm. The enzyme catalyses L-seryl-[isocitrate dehydrogenase] + ATP = O-phospho-L-seryl-[isocitrate dehydrogenase] + ADP + H(+). In terms of biological role, bifunctional enzyme which can phosphorylate or dephosphorylate isocitrate dehydrogenase (IDH) on a specific serine residue. This is a regulatory mechanism which enables bacteria to bypass the Krebs cycle via the glyoxylate shunt in response to the source of carbon. When bacteria are grown on glucose, IDH is fully active and unphosphorylated, but when grown on acetate or ethanol, the activity of IDH declines drastically concomitant with its phosphorylation. This is Isocitrate dehydrogenase kinase/phosphatase from Acidovorax sp. (strain JS42).